We begin with the raw amino-acid sequence, 198 residues long: MARCKS-related protein (198 aa).

Residues 1-198 are disordered; the sequence is MGSQSSKAPR…DPAPASEQNE (198 aa). Glycine 2 is lipidated: N-myristoyl glycine. Threonine 14 bears the Phosphothreonine mark. Residues serine 22, serine 36, serine 41, and serine 48 each carry the phosphoserine modification. The segment covering 53 to 62 has biased composition (low complexity); it reads GTEEAAGATG. Serine 71 is modified (phosphoserine). Residues 76-85 are compositionally biased toward basic and acidic residues; sequence AKGEVPPKET. Threonine 85 carries the phosphothreonine modification. Residues 86–98 show a composition bias toward basic residues; the sequence is PKKKKKFSFKKPF. Positions 87–110 are effector domain involved in lipid-binding and calmodulin-binding; that stretch reads KKKKKFSFKKPFKLSGLSFKRNRK. 3 positions are modified to phosphoserine; by PKC: serine 93, serine 101, and serine 104. At serine 119 the chain carries Phosphoserine. Serine 120 is subject to Phosphoserine; by MAPK8. Serine 132 bears the Phosphoserine mark. A Phosphothreonine; by MAPK8 modification is found at threonine 148. Serine 151 and serine 162 each carry phosphoserine. The segment covering 156–167 has biased composition (low complexity); the sequence is AKGAEASAAAKG. Residue threonine 170 is modified to Phosphothreonine. At threonine 182 the chain carries Phosphothreonine; by MAPK8.

This sequence belongs to the MARCKS family. As to quaternary structure, binds to filamentous actin (F-actin), but not to monomeric G-actin, independently of its phosphorylation status. Interacts with calmodulin. Post-translationally, phosphorylated. Phosphorylation at Ser-120 and Thr-182 is non-redundantly catalyzed by MAPK8 in vivo. Phosphorylation at Thr-148 is preferentially catalyzed by MAPK8 in vivo, but this modification can also be catalyzed by other kinases in the absence of MAPK8. May be phosphorylated by protein kinase C, which disrupts the interaction with calmodulin.

The protein resides in the cytoplasm. It is found in the cytoskeleton. It localises to the cell membrane. In terms of biological role, controls cell movement by regulating actin cytoskeleton homeostasis and filopodium and lamellipodium formation. When unphosphorylated, induces cell migration. When phosphorylated by MAPK8, induces actin bundles formation and stabilization, thereby reducing actin plasticity, hence restricting cell movement, including neuronal migration. May be involved in coupling the protein kinase C and calmodulin signal transduction systems. This Bos taurus (Bovine) protein is MARCKS-related protein (MARCKSL1).